Reading from the N-terminus, the 454-residue chain is Tubulin alpha-A chain (454 aa).

GTP contacts are provided by Gln-12, Asp-72, Ser-141, Gly-145, Thr-146, Thr-180, Asn-207, and Asn-229. Asp-72 is a Mg(2+) binding site. Glu-255 is an active-site residue.

This sequence belongs to the tubulin family. Dimer of alpha and beta chains. A typical microtubule is a hollow water-filled tube with an outer diameter of 25 nm and an inner diameter of 15 nM. Alpha-beta heterodimers associate head-to-tail to form protofilaments running lengthwise along the microtubule wall with the beta-tubulin subunit facing the microtubule plus end conferring a structural polarity. Microtubules usually have 13 protofilaments but different protofilament numbers can be found in some organisms and specialized cells. Requires Mg(2+) as cofactor.

It is found in the cytoplasm. The protein resides in the cytoskeleton. It carries out the reaction GTP + H2O = GDP + phosphate + H(+). In terms of biological role, tubulin is the major constituent of microtubules, a cylinder consisting of laterally associated linear protofilaments composed of alpha- and beta-tubulin heterodimers. Microtubules grow by the addition of GTP-tubulin dimers to the microtubule end, where a stabilizing cap forms. Below the cap, tubulin dimers are in GDP-bound state, owing to GTPase activity of alpha-tubulin. This is Tubulin alpha-A chain (tba-1) from Neurospora crassa (strain ATCC 24698 / 74-OR23-1A / CBS 708.71 / DSM 1257 / FGSC 987).